The chain runs to 429 residues: ATP-sensitive inward rectifier potassium channel 12 (429 aa).

Residues 1-76 (MTAGRVNPYS…IADMFTTCVD (76 aa)) are Cytoplasmic-facing. A helical membrane pass occupies residues 77–103 (IRWRYMLLLFSLAFLVSWLLFGLIFWL). Residues Arg78 and Arg80 each contribute to the a 1,2-diacyl-sn-glycero-3-phospho-(1D-myo-inositol-4,5-bisphosphate) site. Residues 104–129 (IALIHGDLENPGGDDTFKPCVLQVNG) are Extracellular-facing. A disulfide bond links Cys123 and Cys155. The segment at residues 130 to 146 (FVAAFLFSIETQTTIGY) is an intramembrane region (helical; Pore-forming). K(+) contacts are provided by Thr143, Ile144, Gly145, and Tyr146. The short motif at 143-148 (TIGYGF) is the Selectivity filter element. Topologically, residues 147-155 (GFRCVTEEC) are extracellular. The chain crosses the membrane as a helical span at residues 156-183 (PLAVFMVVVQSIVGCIIDSFMIGAIMAK). Lys183 and Lys188 together coordinate a 1,2-diacyl-sn-glycero-3-phospho-(1D-myo-inositol-4,5-bisphosphate). Residues 184-429 (MARPKKRAQT…QRSYRRESEI (246 aa)) are Cytoplasmic-facing. The tract at residues 386–407 (RDEDEEDDDSRGLDDLSPDNRH) is disordered. Residues 395–407 (SRGLDDLSPDNRH) are compositionally biased toward basic and acidic residues.

Belongs to the inward rectifier-type potassium channel family. As to quaternary structure, homotetramer.

The protein localises to the membrane. It localises to the cell membrane. It is found in the sarcolemma. Its subcellular location is the T-tubule. The catalysed reaction is K(+)(in) = K(+)(out). Its activity is regulated as follows. Activated by phosphatidylinositol 4,5-bisphosphate (PtdIns(4,5)P2). PtdIns(4,5)P2 binding to the cytoplasmic side of the channel triggers a conformation change leading to channel opening. In terms of biological role, inward rectifying potassium channel that probably participates in controlling the resting membrane potential in electrically excitable cells. Probably participates in establishing action potential waveform and excitability of neuronal and muscle tissues. Inward rectifier potassium channels are characterized by a greater tendency to allow potassium to flow into the cell rather than out of it. Their voltage dependence is regulated by the concentration of extracellular potassium; as external potassium is raised, the voltage range of the channel opening shifts to more positive voltages. The inward rectification is mainly due to the blockage of outward current by internal magnesium. The sequence is that of ATP-sensitive inward rectifier potassium channel 12 (KCNJ12) from Gallus gallus (Chicken).